Here is a 200-residue protein sequence, read N- to C-terminus: Lipopolysaccharide core heptose(II)-phosphate phosphatase (200 aa).

Residues 1–25 (MLAFCRSSLKSKKYFIILLALAAIA) form the signal peptide.

The protein belongs to the phosphoglycerate mutase family. Ais subfamily.

It is found in the periplasm. The protein operates within bacterial outer membrane biogenesis; lipopolysaccharide metabolism. Its function is as follows. Catalyzes the dephosphorylation of heptose(II) of the outer membrane lipopolysaccharide core. The chain is Lipopolysaccharide core heptose(II)-phosphate phosphatase from Escherichia coli O17:K52:H18 (strain UMN026 / ExPEC).